A 376-amino-acid polypeptide reads, in one-letter code: Chaperone protein DnaJ (376 aa).

A J domain is found at 5 to 70; it reads DFYDVLGVSK…EKKQNYDNFG (66 aa). The segment at 137 to 215 adopts a CR-type zinc-finger fold; it reads GKKQDIKFST…CNGQGNKQAS (79 aa). Zn(2+) contacts are provided by cysteine 150, cysteine 153, cysteine 167, cysteine 170, cysteine 189, cysteine 192, cysteine 203, and cysteine 206. CXXCXGXG motif repeat units follow at residues 150 to 157, 167 to 174, 189 to 196, and 203 to 210; these read CNTCNGNG, CTVCGGNG, CPQCAGSG, and CTDCNGQG.

Belongs to the DnaJ family. In terms of assembly, homodimer. Requires Zn(2+) as cofactor.

Its subcellular location is the cytoplasm. Functionally, participates actively in the response to hyperosmotic and heat shock by preventing the aggregation of stress-denatured proteins and by disaggregating proteins, also in an autonomous, DnaK-independent fashion. Unfolded proteins bind initially to DnaJ; upon interaction with the DnaJ-bound protein, DnaK hydrolyzes its bound ATP, resulting in the formation of a stable complex. GrpE releases ADP from DnaK; ATP binding to DnaK triggers the release of the substrate protein, thus completing the reaction cycle. Several rounds of ATP-dependent interactions between DnaJ, DnaK and GrpE are required for fully efficient folding. Also involved, together with DnaK and GrpE, in the DNA replication of plasmids through activation of initiation proteins. This is Chaperone protein DnaJ from Pelagibacter ubique (strain HTCC1062).